Reading from the N-terminus, the 619-residue chain is MSVRPHNDFDGKAFAAQLSTAPGVYRMYAGDDTLLYVGKAGALRKRVGSYFNGTPKNARLTSMLSQVARMDVTVTRSEAEALLLENQLIKSLSPRYNVSLRDDKSYPYVLLTREQWPRIALHRGPRAVQGRYFGPYTGVTGVRETLSLMHKLFKLRSCEDSVFRNRSRPCLQYQIGRCSGPCVDLVAAPDYAESVRRATMFLEGKSDQLGEEIMHSMQQASEALEFERAARLRDLLSSLRSMQNRQYVDGRAADLDVLACATQSSQACVLLLSFRDGRNLGTRSFFPKTNGEDSADEILGAFVSQYYAEHSPPREILLDREIPEAELIEAALSTAAEHKVALKWNVRGERAGYLLLATRNAQLTLVTELTSQSAQHARSEALREMLGLAEPVKRVECFDISHTMGEATVASCVVFDASGPVRGQYRRFNISGITPGDDYAAMRQAIERRFRRAVEENGVLPDVLLIDGGAGQLAQAQAALADLGVENVLLVGVAKGEERRAGHEALIMADGRELRPGAASPALQFIQQVRDEAHRFAITGHRGRRHKARMTSKLEDIPGIGPRRRASLLKHFGGLVGLKAAGEAEIARVEGVNAALAARIYANLHGLALPDAAGEASPQ.

The GIY-YIG domain occupies 20-98 (TAPGVYRMYA…IKSLSPRYNV (79 aa)). The UVR domain occupies 207–242 (DQLGEEIMHSMQQASEALEFERAARLRDLLSSLRSM).

This sequence belongs to the UvrC family. As to quaternary structure, interacts with UvrB in an incision complex.

The protein resides in the cytoplasm. The UvrABC repair system catalyzes the recognition and processing of DNA lesions. UvrC both incises the 5' and 3' sides of the lesion. The N-terminal half is responsible for the 3' incision and the C-terminal half is responsible for the 5' incision. The protein is UvrABC system protein C of Xanthomonas euvesicatoria pv. vesicatoria (strain 85-10) (Xanthomonas campestris pv. vesicatoria).